We begin with the raw amino-acid sequence, 87 residues long: Small ribosomal subunit protein bS20 (87 aa).

This sequence belongs to the bacterial ribosomal protein bS20 family.

Binds directly to 16S ribosomal RNA. The sequence is that of Small ribosomal subunit protein bS20 from Alkaliphilus oremlandii (strain OhILAs) (Clostridium oremlandii (strain OhILAs)).